Consider the following 617-residue polypeptide: Manganese lipoxygenase (617 aa).

Residues 1–17 form the signal peptide; the sequence is MRIGLLAFAVAARYVEA. Over residues 23–48 the composition is skewed to low complexity; the sequence is GEEVASSSAPTTLPSTSSSSALPSPT. A disordered region spans residues 23 to 59; the sequence is GEEVASSSAPTTLPSTSSSSALPSPTKYTLPHEDPNP. Asparagine 109, asparagine 119, and asparagine 160 each carry an N-linked (GlcNAc...) asparagine glycan. A Lipoxygenase domain is found at 122–617; the sequence is LRDIQSHGGL…PAVNPFFLSI (496 aa). Mn(2+) contacts are provided by histidine 293, histidine 297, histidine 479, and asparagine 483. Residue asparagine 547 is glycosylated (N-linked (GlcNAc...) asparagine). Isoleucine 617 contacts Mn(2+).

Belongs to the lipoxygenase family. Manganese lipoxygenase subfamily. Mn(2+) serves as cofactor.

It is found in the secreted. The catalysed reaction is (9Z,12Z)-octadecadienoate + O2 = (9S)-hydroperoxy-(10E,12Z)-octadecadienoate. It catalyses the reaction (9Z,12Z)-octadecadienoate + O2 = (11S)-hydroperoxy-(9Z,12Z)-octadecadienoate. It carries out the reaction (9Z,12Z)-octadecadienoate + O2 = (13R)-hydroperoxy-(9Z,11E)-octadecadienoate. The enzyme catalyses (9Z,12Z,15Z)-octadecatrienoate + O2 = (9S)-hydroperoxy-(10E,12Z,15Z)-octadecatrienoate. The catalysed reaction is (9Z,12Z,15Z)-octadecatrienoate + O2 = (11R)-hydroperoxy-(9Z,12Z,15Z)-octadecatrienoate. It catalyses the reaction (9Z,12Z,15Z)-octadecatrienoate + O2 = (13R)-hydroperoxy-(9Z,11E,15Z)-octadecatrienoate. In terms of biological role, lipoxygenase that metabolizes linoleic and alpha-linolenic acids to 9S-, 11- and 13R-hydroperoxy fatty acids. At the end of lipoxygenation, the intermediate products 11S-HPODE and 13R-HPODE from linoleic acid are then transformed into 9S-HPODE as the final product. The intermediate product 11R-HPOTrE from alpha-linolenic acid is transformed into 9S-HPOTrE and 13R-HPOTrE as the final products. 9S-HPOTrE is further oxidized by the enzyme to 9,16-DiHOTrE as the end product. Also acts on gamma-linolenic acid producing 9-HOTrE(n-6) as the main metabolite. This Nakataea oryzae (Rice stem rot fungus) protein is Manganese lipoxygenase.